The chain runs to 210 residues: ATP-dependent Clp protease proteolytic subunit (210 aa).

Serine 106 serves as the catalytic Nucleophile. Residue histidine 131 is part of the active site.

It belongs to the peptidase S14 family. Fourteen ClpP subunits assemble into 2 heptameric rings which stack back to back to give a disk-like structure with a central cavity, resembling the structure of eukaryotic proteasomes.

The protein localises to the cytoplasm. It catalyses the reaction Hydrolysis of proteins to small peptides in the presence of ATP and magnesium. alpha-casein is the usual test substrate. In the absence of ATP, only oligopeptides shorter than five residues are hydrolyzed (such as succinyl-Leu-Tyr-|-NHMec, and Leu-Tyr-Leu-|-Tyr-Trp, in which cleavage of the -Tyr-|-Leu- and -Tyr-|-Trp bonds also occurs).. Its function is as follows. Cleaves peptides in various proteins in a process that requires ATP hydrolysis. Has a chymotrypsin-like activity. Plays a major role in the degradation of misfolded proteins. This is ATP-dependent Clp protease proteolytic subunit from Bartonella henselae (strain ATCC 49882 / DSM 28221 / CCUG 30454 / Houston 1) (Rochalimaea henselae).